A 573-amino-acid chain; its full sequence is Mucin-13 (573 aa).

An N-terminal signal peptide occupies residues 1–17 (MKGFLLLSLSLLLVTVG). Over residues 16 to 234 (VGSSSQASST…VPSGGSTGPS (219 aa)) the composition is skewed to low complexity. The segment at 16 to 237 (VGSSSQASST…GGSTGPSDLC (222 aa)) is disordered. Residues 18 to 480 (SSSQASSTTS…FGYSGMNCKD (463 aa)) lie on the Extracellular side of the membrane. Residues 233 to 273 (PSDLCNPNPCKGTASCVKLHSKHFCLCLEGYYYNSSLSSCV) form the EGF-like 1 domain. 3 disulfide bridges follow: cysteine 237–cysteine 248, cysteine 242–cysteine 257, and cysteine 259–cysteine 272. N-linked (GlcNAc...) asparagine glycosylation is found at asparagine 266, asparagine 316, and asparagine 397. Positions 274–391 (KGTTFPGDIS…DYVSINLCDH (118 aa)) constitute an SEA domain. EGF-like domains are found at residues 385-425 (SINL…PFCV) and 425-467 (VAVT…RKCE). Intrachain disulfides connect cysteine 389-cysteine 402, cysteine 394-cysteine 408, cysteine 410-cysteine 424, cysteine 429-cysteine 441, cysteine 433-cysteine 451, and cysteine 453-cysteine 466. Residues 481 to 508 (QFQLILTIVGTIAGALILILLIAFIVSA) traverse the membrane as a helical segment. Over 509–573 (RSKNKKKDGE…NQRSMPRPDY (65 aa)) the chain is Cytoplasmic. Residues 548–573 (PKVRTGVPSQTPNPYANQRSMPRPDY) form a disordered region. A compositionally biased stretch (polar residues) spans 554–567 (VPSQTPNPYANQRS).

As to quaternary structure, homodimer of beta subunits. In terms of processing, cleaved into two subunits, alpha and beta, probably between the first EGF domain and the SEA domain. Beta subunit contains the cytoplasmic tail and alpha subunit the extracellular tail. The homooligomerization into dimers is dependent on intrachain disulfide bonds. Highly N-glycosylated.

The protein localises to the cell membrane. The protein resides in the secreted. Functionally, epithelial and hemopoietic transmembrane mucin that may play a role in cell signaling. This chain is Mucin-13 (Muc13), found in Mus musculus (Mouse).